A 256-amino-acid chain; its full sequence is Probable enoyl-CoA hydratase echA14 (256 aa).

Positions G235–R256 are disordered.

This sequence belongs to the enoyl-CoA hydratase/isomerase family.

It carries out the reaction a (3S)-3-hydroxyacyl-CoA = a (2E)-enoyl-CoA + H2O. The enzyme catalyses a 4-saturated-(3S)-3-hydroxyacyl-CoA = a (3E)-enoyl-CoA + H2O. Functionally, could possibly oxidize fatty acids using specific components. This is Probable enoyl-CoA hydratase echA14 (echA14) from Mycobacterium tuberculosis (strain CDC 1551 / Oshkosh).